The sequence spans 369 residues: Aminomethyltransferase (369 aa).

This sequence belongs to the GcvT family. As to quaternary structure, the glycine cleavage system is composed of four proteins: P, T, L and H.

It catalyses the reaction N(6)-[(R)-S(8)-aminomethyldihydrolipoyl]-L-lysyl-[protein] + (6S)-5,6,7,8-tetrahydrofolate = N(6)-[(R)-dihydrolipoyl]-L-lysyl-[protein] + (6R)-5,10-methylene-5,6,7,8-tetrahydrofolate + NH4(+). In terms of biological role, the glycine cleavage system catalyzes the degradation of glycine. The polypeptide is Aminomethyltransferase (Xanthomonas oryzae pv. oryzae (strain MAFF 311018)).